The chain runs to 330 residues: Ketol-acid reductoisomerase (NADP(+)) (330 aa).

One can recognise a KARI N-terminal Rossmann domain in the interval 1–182 (MKKVYYDQDA…GCTRAGVFET (182 aa)). NADP(+) contacts are provided by residues 25–28 (YGSQ), Ser-51, Ser-53, and 83–86 (DQIQ). His-108 is an active-site residue. Gly-134 contributes to the NADP(+) binding site. Residues 183–328 (TFKEETETDL…AELRQMMPWL (146 aa)) enclose the KARI C-terminal knotted domain. Mg(2+) is bound by residues Asp-191, Glu-195, Glu-227, and Glu-231. Residue Ser-252 coordinates substrate.

Belongs to the ketol-acid reductoisomerase family. It depends on Mg(2+) as a cofactor.

It catalyses the reaction (2R)-2,3-dihydroxy-3-methylbutanoate + NADP(+) = (2S)-2-acetolactate + NADPH + H(+). The enzyme catalyses (2R,3R)-2,3-dihydroxy-3-methylpentanoate + NADP(+) = (S)-2-ethyl-2-hydroxy-3-oxobutanoate + NADPH + H(+). It functions in the pathway amino-acid biosynthesis; L-isoleucine biosynthesis; L-isoleucine from 2-oxobutanoate: step 2/4. It participates in amino-acid biosynthesis; L-valine biosynthesis; L-valine from pyruvate: step 2/4. Involved in the biosynthesis of branched-chain amino acids (BCAA). Catalyzes an alkyl-migration followed by a ketol-acid reduction of (S)-2-acetolactate (S2AL) to yield (R)-2,3-dihydroxy-isovalerate. In the isomerase reaction, S2AL is rearranged via a Mg-dependent methyl migration to produce 3-hydroxy-3-methyl-2-ketobutyrate (HMKB). In the reductase reaction, this 2-ketoacid undergoes a metal-dependent reduction by NADPH to yield (R)-2,3-dihydroxy-isovalerate. The protein is Ketol-acid reductoisomerase (NADP(+)) of Carboxydothermus hydrogenoformans (strain ATCC BAA-161 / DSM 6008 / Z-2901).